The sequence spans 1196 residues: Phosphoglucan, water dikinase, chloroplastic (1196 aa).

The N-terminal 54 residues, 1-54 (MESIGSHCCSSPFTFITRNSSSSLPRLVNITHRVNLSHQSHRLRNSNSRLTCTA), are a transit peptide targeting the chloroplast. An N-acetylthreonine modification is found at Thr55. Residues 66–166 (KKDGSGTKVR…NFSVVCHWDA (101 aa)) enclose the CBM20 domain. The tract at residues 174–200 (PQEVGNDDDVGDGGHERDNHDVGDDRV) is disordered. The segment covering 185–200 (DGGHERDNHDVGDDRV) has biased composition (basic and acidic residues). Residue His759 is the Tele-phosphohistidine intermediate of the active site. The tract at residues 804-855 (LSTEGRSRTSKSSATKKTDKNSLSKKKTDKKSLSIDDEESKPGSSSSNSLLY) is disordered.

Belongs to the PEP-utilizing enzyme family. In terms of assembly, homodimer. It depends on Mg(2+) as a cofactor. In terms of tissue distribution, in all starch containing tissues (e.g. roots, leaves, stems, inflorescence and siliques).

Its subcellular location is the plastid. The protein resides in the chloroplast. It catalyses the reaction [(1-&gt;4)-6-phospho-alpha-D-glucosyl](n) + n ATP + n H2O = [(1-&gt;4)-3,6-bisphospho-alpha-D-glucosyl](n) + n AMP + n phosphate + 2n H(+). Functionally, mediates the incorporation of phosphate into starch-like phospho-alpha-glucan, mostly at the C-3 position of glucose units. Required for starch degradation, suggesting that the phosphate content of starch regulates its degradability. The chain is Phosphoglucan, water dikinase, chloroplastic (GWD3) from Arabidopsis thaliana (Mouse-ear cress).